The primary structure comprises 145 residues: MAEQQPSKEEKKEDKKDEKEEELPAPSVQQSIRQLPKIQITDDDKGEQLPECTEGEWDASDEPFSAELLNVKNAPNKVSVFSGPYRSKETIEKIKKFRAAMPPVIPIIDERPDKLAQMMSRIFSEIIDGRDLSKIKVTVSTQLPQ.

Positions M1–E18 are enriched in basic and acidic residues. Residues M1–D61 are disordered.

This is an uncharacterized protein from Caenorhabditis elegans.